Consider the following 376-residue polypeptide: MFKLPPISLYIHIPWCIKKCGYCDFYSYVNKSFIPEKEYIDHLLKDLEKDLSLIKEREINSIFIGGGTPSLLKSSSIKKMMREIKKRINISNTAEITIEANPTTLEYKRFFNYKKSGINRFSIGVQTFNSDLLKKIERTYNKREAILAVEEIKKINKNFNLDIMYGLPNQSLKDVLLDLQYAVKYNPTHISWYQLTLEPNTPFYVKKLNLPNENNIFKMLVEGEKFLKQSGYKKYEISSYAKLNYECQHNLNYWNFGDYIGIGCSAHGKITQINGDIIRTIKNKNINDFMNGKYLKHKNFVLKKDKPFEYFMNIFRLYKPVLKRQFEERTNINQNYIKEKIKKAIEKGYLKNKIDFWDTTKKGKMFLNSLLKIFLD.

Residues 1–236 (MFKLPPISLY…LKQSGYKKYE (236 aa)) form the Radical SAM core domain. Y10 contacts S-adenosyl-L-methionine. Positions 16, 20, and 23 each coordinate [4Fe-4S] cluster. S-adenosyl-L-methionine contacts are provided by residues G66, 67–68 (GT), E99, Q126, R138, and D162.

It belongs to the anaerobic coproporphyrinogen-III oxidase family. HemW subfamily. Requires [4Fe-4S] cluster as cofactor.

The protein resides in the cytoplasm. In terms of biological role, probably acts as a heme chaperone, transferring heme to an unknown acceptor. Binds one molecule of heme per monomer, possibly covalently. Binds 1 [4Fe-4S] cluster. The cluster is coordinated with 3 cysteines and an exchangeable S-adenosyl-L-methionine. The chain is Heme chaperone HemW from Buchnera aphidicola subsp. Schizaphis graminum (strain Sg).